A 121-amino-acid polypeptide reads, in one-letter code: Small ribosomal subunit protein uS13 (121 aa).

The tract at residues 92–121 (KRGLPVRGQRTRTNARTRKGPRRAAASLKK) is disordered.

This sequence belongs to the universal ribosomal protein uS13 family. In terms of assembly, part of the 30S ribosomal subunit. Forms a loose heterodimer with protein S19. Forms two bridges to the 50S subunit in the 70S ribosome.

Its function is as follows. Located at the top of the head of the 30S subunit, it contacts several helices of the 16S rRNA. In the 70S ribosome it contacts the 23S rRNA (bridge B1a) and protein L5 of the 50S subunit (bridge B1b), connecting the 2 subunits; these bridges are implicated in subunit movement. Contacts the tRNAs in the A and P-sites. This is Small ribosomal subunit protein uS13 from Bordetella bronchiseptica (strain ATCC BAA-588 / NCTC 13252 / RB50) (Alcaligenes bronchisepticus).